Consider the following 952-residue polypeptide: Chaperone protein ClpC2, chloroplastic (952 aa).

The transit peptide at 1 to 45 (MAWSIALLTPPFFGPGRHVQAKEYREPRGCVMKMSSLKAPVLRIQ) directs the protein to the chloroplast. One can recognise a Clp R domain in the interval 115–257 (FERFTEKAIK…RTQVIRMVGE (143 aa)). Repeat stretches follow at residues 118–183 (FTEK…IGRG) and 193–257 (FTPR…MVGE). The segment at 278-525 (LEEYGTNLTK…RVRLRHAQLP (248 aa)) is i. 323 to 330 (GEPGVGKT) provides a ligand contact to ATP. In terms of domain architecture, UVR spans 532 to 567 (EKQLRQITKEKNEAVRSQDFEMAGSHRDREIELKAE). The segment at 592 to 783 (VTESDIQHIV…LLIMTSNVGS (192 aa)) is II. 666–673 (GPTGVGKS) contributes to the ATP binding site.

It belongs to the ClpA/ClpB family. ClpC subfamily. In terms of assembly, homodimer and homohexamer. Hexamerization upon addition of ATP. Interacts with CLPT1. Interacts with CLPS1. Stably associated with the import machinery. Interacts with CLPF. Mg(2+) is required as a cofactor. Expressed at low levels in roots and inflorescences. Expressed at very low levels in rosette leaves. Expressed in photosynthetic green tissues with high levels in young, developing leaf tissues.

It localises to the plastid. Its subcellular location is the chloroplast stroma. It is found in the chloroplast membrane. It catalyses the reaction ATP + H2O = ADP + phosphate + H(+). Functionally, molecular chaperone. May act as a suppressor of FtsH-mediated thylakoid membrane biogenesis and may enhance photoinhibition. Seems not involved in chloroplastic protein import. Probable component of the TIC-associated stromal import motor involved in inner membrane translocation. Has an ATPase activity, but no ADPase activity. Interacts with transit peptides with a positional preference. Localization of the signal sequence at the N-terminal end of a protein seems mandatory for interaction to take place. The sequence is that of Chaperone protein ClpC2, chloroplastic from Arabidopsis thaliana (Mouse-ear cress).